Here is a 118-residue protein sequence, read N- to C-terminus: Large ribosomal subunit protein bL17 (118 aa).

The protein belongs to the bacterial ribosomal protein bL17 family. As to quaternary structure, part of the 50S ribosomal subunit. Contacts protein L32.

This is Large ribosomal subunit protein bL17 from Hydrogenobaculum sp. (strain Y04AAS1).